Reading from the N-terminus, the 539-residue chain is O-phosphoserine--tRNA(Cys) ligase (539 aa).

Residues 188–190 (HMT), 233–235 (SAS), 275–276 (YY), and N327 each bind substrate.

Belongs to the class-II aminoacyl-tRNA synthetase family. O-phosphoseryl-tRNA(Cys) synthetase subfamily. Homotetramer. Interacts with SepCysS.

It carries out the reaction tRNA(Cys) + O-phospho-L-serine + ATP = O-phospho-L-seryl-tRNA(Cys) + AMP + diphosphate. Catalyzes the attachment of O-phosphoserine (Sep) to tRNA(Cys). In Methanococcoides burtonii (strain DSM 6242 / NBRC 107633 / OCM 468 / ACE-M), this protein is O-phosphoserine--tRNA(Cys) ligase.